We begin with the raw amino-acid sequence, 105 residues long: Pyrimidine/purine nucleoside phosphorylase (105 aa).

This sequence belongs to the nucleoside phosphorylase PpnP family.

The catalysed reaction is a purine D-ribonucleoside + phosphate = a purine nucleobase + alpha-D-ribose 1-phosphate. The enzyme catalyses adenosine + phosphate = alpha-D-ribose 1-phosphate + adenine. It carries out the reaction cytidine + phosphate = cytosine + alpha-D-ribose 1-phosphate. It catalyses the reaction guanosine + phosphate = alpha-D-ribose 1-phosphate + guanine. The catalysed reaction is inosine + phosphate = alpha-D-ribose 1-phosphate + hypoxanthine. The enzyme catalyses thymidine + phosphate = 2-deoxy-alpha-D-ribose 1-phosphate + thymine. It carries out the reaction uridine + phosphate = alpha-D-ribose 1-phosphate + uracil. It catalyses the reaction xanthosine + phosphate = alpha-D-ribose 1-phosphate + xanthine. Its function is as follows. Catalyzes the phosphorolysis of diverse nucleosides, yielding D-ribose 1-phosphate and the respective free bases. Can use uridine, adenosine, guanosine, cytidine, thymidine, inosine and xanthosine as substrates. Also catalyzes the reverse reactions. This is Pyrimidine/purine nucleoside phosphorylase from Acidovorax ebreus (strain TPSY) (Diaphorobacter sp. (strain TPSY)).